The following is a 336-amino-acid chain: Ferredoxin--NADP reductase 1 (336 aa).

E37, K45, F50, V90, L125, D287, and T328 together coordinate FAD.

It belongs to the ferredoxin--NADP reductase type 2 family. Homodimer. It depends on FAD as a cofactor.

The catalysed reaction is 2 reduced [2Fe-2S]-[ferredoxin] + NADP(+) + H(+) = 2 oxidized [2Fe-2S]-[ferredoxin] + NADPH. This chain is Ferredoxin--NADP reductase 1 (ycgT), found in Bacillus subtilis (strain 168).